The chain runs to 397 residues: DNA-directed RNA polymerase subunit Rpo1C (397 aa).

This sequence belongs to the RNA polymerase beta' chain family. Part of the RNA polymerase complex.

The protein localises to the cytoplasm. The catalysed reaction is RNA(n) + a ribonucleoside 5'-triphosphate = RNA(n+1) + diphosphate. Its function is as follows. DNA-dependent RNA polymerase (RNAP) catalyzes the transcription of DNA into RNA using the four ribonucleoside triphosphates as substrates. Forms part of the jaw domain. The sequence is that of DNA-directed RNA polymerase subunit Rpo1C from Methanosarcina acetivorans (strain ATCC 35395 / DSM 2834 / JCM 12185 / C2A).